The following is a 524-amino-acid chain: Serine/threonine-protein kinase PAK 2 (524 aa).

The segment at 1 to 81 (MSDNGELEDK…PEISPPSDFE (81 aa)) is disordered. Ser2 is subject to N-acetylserine. A phosphoserine mark is found at Ser2, Ser20, Ser55, and Ser58. Phosphothreonine is present on Thr60. Lys62 carries the N6-acetyllysine modification. The residue at position 64 (Ser64) is a Phosphoserine. The span at 67 to 81 (KEKERPEISPPSDFE) shows a compositional bias: basic and acidic residues. Residues 69–112 (KERPEISPPSDFEHTIHVGFDAVTGEFTGMPEQWARLLQTSNIT) are GTPase-binding. The segment at 69–137 (KERPEISPPS…KFYDSNTVKQ (69 aa)) is autoregulatory region. The CRIB domain maps to 74 to 87 (ISPPSDFEHTIHVG). Lys128 carries the post-translational modification N6-acetyllysine. Thr134 bears the Phosphothreonine mark. Tyr139 is subject to Phosphotyrosine. Position 141 is a phosphoserine (Ser141). Residues 142-188 (FTPPEKDGFPSGTPALNTKGSETSAVVTEEDDDDEDAAPPVIAPRPD) are disordered. Thr143 carries the phosphothreonine modification. Ser152 is subject to Phosphoserine. 3 positions are modified to phosphothreonine: Thr154, Thr159, and Thr169. The span at 155-167 (PALNTKGSETSAV) shows a compositional bias: polar residues. Over residues 169-178 (TEEDDDDEDA) the composition is skewed to acidic residues. Residue Ser197 is modified to Phosphoserine. The segment at 204–228 (APVGDSNVDSGAKSSDKQKKKAKMT) is disordered. A Nuclear localization signal motif is present at residues 245–251 (PKKKYTR). The region spanning 249–499 (YTRYEKIGQG…SAKELLQHPF (251 aa)) is the Protein kinase domain. ATP contacts are provided by residues 255–263 (IGQGASGTV) and Lys278. Residue Arg367 is the Proton acceptor of the active site. The residue at position 402 (Thr402) is a Phosphothreonine; by autocatalysis.

The protein belongs to the protein kinase superfamily. STE Ser/Thr protein kinase family. STE20 subfamily. Interacts tightly with GTP-bound but not GDP-bound CDC42/p21 and RAC1. Interacts with SH3MD4. Interacts with SCRIB. Interacts with ARHGEF7 and GIT1. PAK-2p34 interacts with ARHGAP10. Interacts with RAC1. In terms of processing, full-length PAK2 is autophosphorylated when activated by CDC42/p21. Following cleavage, both peptides, PAK-2p27 and PAK-2p34, become highly autophosphorylated. Autophosphorylation of PAK-2p27 can occur in the absence of any effectors and is dependent on phosphorylation of Thr-402, because PAK-2p27 is acting as an exogenous substrate. During apoptosis proteolytically cleaved by caspase-3 or caspase-3-like proteases to yield active PAK-2p34. Post-translationally, ubiquitinated, leading to its proteasomal degradation.

It is found in the cytoplasm. The protein localises to the nucleus. Its subcellular location is the perinuclear region. It localises to the membrane. It carries out the reaction L-seryl-[protein] + ATP = O-phospho-L-seryl-[protein] + ADP + H(+). The catalysed reaction is L-threonyl-[protein] + ATP = O-phospho-L-threonyl-[protein] + ADP + H(+). Its activity is regulated as follows. Activated by binding small G proteins. Binding of GTP-bound CDC42 or RAC1 to the autoregulatory region releases monomers from the autoinhibited dimer, enables phosphorylation of Thr-402 and allows the kinase domain to adopt an active structure. Following caspase cleavage, autophosphorylated PAK-2p34 is constitutively active. Its function is as follows. Serine/threonine protein kinase that plays a role in a variety of different signaling pathways including cytoskeleton regulation, cell motility, cell cycle progression, apoptosis or proliferation. Acts as a downstream effector of the small GTPases CDC42 and RAC1. Activation by the binding of active CDC42 and RAC1 results in a conformational change and a subsequent autophosphorylation on several serine and/or threonine residues. Full-length PAK2 stimulates cell survival and cell growth. Phosphorylates MAPK4 and MAPK6 and activates the downstream target MAPKAPK5, a regulator of F-actin polymerization and cell migration. Phosphorylates JUN and plays an important role in EGF-induced cell proliferation. Phosphorylates many other substrates including histone H4 to promote assembly of H3.3 and H4 into nucleosomes, BAD, ribosomal protein S6, or MBP. Phosphorylates CASP7, thereby preventing its activity. Additionally, associates with ARHGEF7 and GIT1 to perform kinase-independent functions such as spindle orientation control during mitosis. On the other hand, apoptotic stimuli such as DNA damage lead to caspase-mediated cleavage of PAK2, generating PAK-2p34, an active p34 fragment that translocates to the nucleus and promotes cellular apoptosis involving the JNK signaling pathway. Caspase-activated PAK2 phosphorylates MKNK1 and reduces cellular translation. The polypeptide is Serine/threonine-protein kinase PAK 2 (Pak2) (Mus musculus (Mouse)).